Consider the following 340-residue polypeptide: 4-dimethylallyltryptophan N-methyltransferase ifgB (340 aa).

Belongs to the methyltransferase superfamily. As to quaternary structure, homodimer.

The enzyme catalyses 4-(3-methylbut-2-enyl)-L-tryptophan + S-adenosyl-L-methionine = 4-(3-methylbut-2-enyl)-L-abrine + S-adenosyl-L-homocysteine + H(+). It participates in alkaloid biosynthesis; ergot alkaloid biosynthesis. Functionally, 4-dimethylallyltryptophan N-methyltransferase; part of the gene cluster that mediates the biosynthesis of isofumigaclavines, fungal ergot alkaloids. The tryptophan dimethylallyltransferase ifgA catalyzes the first step of ergot alkaloid biosynthesis by condensing dimethylallyl diphosphate (DMAP) and tryptophan to form 4-dimethylallyl-L-tryptophan. The second step is catalyzed by the methyltransferase ifgB that methylates 4-dimethylallyl-L-tryptophan in the presence of S-adenosyl-L-methionine, resulting in the formation of N-methyl-dimethylallyl-L-tryptophan. The catalase ifgD and the FAD-dependent oxidoreductase ifgC then transform N-methyl-dimethylallyl-L-tryptophan to chanoclavine-I which is further oxidized by ifgE in the presence of NAD(+), resulting in the formation of chanoclavine-I aldehyde. The chanoclavine-I aldehyde reductases ifgG and/or fgaOx3 reduce chanoclavine-I aldehyde to dihydrochanoclavine-I aldehyde that spontaneously dehydrates to form 6,8-dimethyl-6,7-didehydroergoline. The festuclavine dehydrogenases ifgF1 and/or ifgF2 then catalyze the reduction of 6,8-dimethyl-6,7-didehydroergoline to form festuclavine. Hydrolysis of festuclavine by a yet undetermined cytochrome P450 monooxygenase (called ifgH) then leads to the formation of isofumigaclavine B which is in turn acetylated by ifgI to isofumigaclavine A. Penicillium roqueforti has interestingly at least two sets of genes for the consumption of chanoclavine-I aldehyde on three different loci, the OYEs ifgG/fgaOx3 and the festuclavine synthase homologs ifgF1/ifgF2. The reason for the duplication of these genes is unclear, probably to ensure the conversion of chanoclavine-I aldehyde by differential gene expression under various environmental conditions. In Penicillium roqueforti (strain FM164), this protein is 4-dimethylallyltryptophan N-methyltransferase ifgB.